The sequence spans 1090 residues: MSSDSNDLDEDELLQMALKEQAKRDLTYQKPPSSSARKPVANLVQQPRQQKPVAAAAAPPKKSAAAVRKPSMDEDEESEVELLSISSGDDDLEREREIGGSSGGAGRGRGSDVREKGRARKEDDGAWDGGEPDCWKRVNEAELARRVRDMRESRTAPVVQKVEGKAPAPGKKVALTSLQSLPRGMECIDPLKLGIIDNKTLRLITESSGSPSKAEKVDNTLREKLVYFSDHFDPKLFLSRIHQDTTAADLEAGALGLKSDLKGRNLQRKQLVKDNFDCFVSCKTTIDDIESKLKRIEEDPEGSGTTHLFNCMKSVTSRANLAFEPLFERQAQAEKIRSVQGMLQRFRTLFNLPSIIRSSISKGEYDLAVREYKKAKSIALPSHVNILKRVLEEVEKVMLEFKGTLYKSMEDPKIDFTSLENTVRLLLELEPESDPVWHYLNVQNHRIHGLLEKCTYDHEARVEILRNDTHEKAISDAKWQQIQQNGVSYSDTASSNENNAVQVDLQSVEFPSEEIDILKGRYIKRLTAVLVHHIPVFWKTAISIFSGKFAKSSQVTDTSANKAEEKVTEARYSTHSLEEVAGMIRKTISVYEAKVNSTFCDFDESCILRPFMSDAINEVSKACQAFEAKESTPHSAVVALRKIQAEITKIYIQRLCSWMRASTEGISKEETWIPVSILERNRSPYAISYLPLAFRSVIVSGMEQVNLMILSVKSEAAKSEDMFAQIEEIIISVRLAFLNCFLDFAAHLEQIGADLSQSTSRQDNWKNGYSDEHQEEPSANTYGSVIDPHRRLLMVLSNIGYCKDELASELYNKFKYTWLQSRDKNEDSSDLQDLIMSFSGLGEKVLEHYTFAKANLIRTAATNYLLDSGIQWGSAPQVKGIRDAAVELLHTLVAVHAEVFAGAKPLLDKILGVLIEGLIDTFLSVVEENRSSDLRSIDANGFCQLMFELEYFETVLYSYFTSAATESLKSLQGTVLEIAIESISEAVETPGHNRRPTRGSEDTVSDDKQSVSADDLLALTKQCSNELLQQELERTRVNTACFAESAPLESTPPLPKATYSSFRGSMDSPSRNYRGSQSSGSPINARPRRR.

Residues 18 to 128 form a disordered region; it reads LKEQAKRDLT…ARKEDDGAWD (111 aa). Residues 45-69 are compositionally biased toward low complexity; sequence QQPRQQKPVAAAAAPPKKSAAAVRK. Basic and acidic residues predominate over residues 109-124; it reads RGSDVREKGRARKEDD. Ser180 carries the phosphoserine modification. Disordered regions lie at residues 759–783, 987–1010, and 1046–1090; these read TSRQ…NTYG, VETP…DKQS, and APLE…PRRR. Positions 998–1009 are enriched in basic and acidic residues; it reads RGSEDTVSDDKQ. The segment covering 1058–1082 has biased composition (polar residues); sequence TYSSFRGSMDSPSRNYRGSQSSGSP.

Belongs to the SEC5 family. As to quaternary structure, the exocyst complex is composed of SEC3, SEC5, SEC6, SEC8, SEC10, EXO70A1 and EXO84B. Interacts with SEC3A and EXO70B1. Binds to EXO70H1 and EXO70B2. Binds directly to B1L.

The protein resides in the cytoplasm. It localises to the cytosol. The protein localises to the secreted. Its subcellular location is the extracellular exosome. Functionally, component of the exocyst complex involved in the docking of exocytic vesicles with fusion sites on the plasma membrane during regulated or polarized secretion. Involved in polarized cell growth and organ morphogenesis. During cytokinesis, involved in cell plate initiation, cell plate maturation and formation of new primary cell wall. Probable component of an exocyst subcomplex specifically involved in autophagy-related, Golgi-independent membrane traffic to the vacuole. Regulates autophagosome formation and autophagy-related Golgi-independent import into the vacuole. The chain is Exocyst complex component SEC5A from Arabidopsis thaliana (Mouse-ear cress).